A 218-amino-acid polypeptide reads, in one-letter code: MTTTFERQVKGLLGTKLGMTQVWDENGKFVPVTVVKADSNVVTQLRNTDKDGYNAVQIGFGAIDPRKVTKPLAGHFAAAGVTPRRHVVELRTSDAAEYELGQELSVELFEAGAKVDVVGTTKGKGTAGVMKRHGFSGVGASHGAHKNHRKPGSIGGASYPARVFKGMRMAGRMGNARHTTMNLTVHAVDAENSLLLIKGALPGPKGSVVLVRSTVKGA.

Residues 137-157 form a disordered region; it reads GVGASHGAHKNHRKPGSIGGA.

This sequence belongs to the universal ribosomal protein uL3 family. Part of the 50S ribosomal subunit. Forms a cluster with proteins L14 and L19.

Its function is as follows. One of the primary rRNA binding proteins, it binds directly near the 3'-end of the 23S rRNA, where it nucleates assembly of the 50S subunit. The sequence is that of Large ribosomal subunit protein uL3 from Kocuria rhizophila (strain ATCC 9341 / DSM 348 / NBRC 103217 / DC2201).